Here is a 273-residue protein sequence, read N- to C-terminus: Chaperone protein PsaB (273 aa).

An N-terminal signal peptide occupies residues 1-31; the sequence is MKNLFFSAYKKVFSYITSIVIFMVSLPYAYS. C128 and C163 are disulfide-bonded.

Belongs to the periplasmic pilus chaperone family.

The protein localises to the periplasm. Functionally, required for the biogenesis of the pH 6 antigen. This Yersinia pestis protein is Chaperone protein PsaB (psaB).